The sequence spans 438 residues: Argininosuccinate lyase (438 aa).

Belongs to the lyase 1 family. Argininosuccinate lyase subfamily.

The protein localises to the cytoplasm. The catalysed reaction is 2-(N(omega)-L-arginino)succinate = fumarate + L-arginine. It functions in the pathway amino-acid biosynthesis; L-arginine biosynthesis; L-arginine from L-ornithine and carbamoyl phosphate: step 3/3. In Clostridioides difficile (strain 630) (Peptoclostridium difficile), this protein is Argininosuccinate lyase.